The sequence spans 351 residues: Phosphoribosylformylglycinamidine cyclo-ligase (351 aa).

Belongs to the AIR synthase family.

The protein localises to the cytoplasm. It catalyses the reaction 2-formamido-N(1)-(5-O-phospho-beta-D-ribosyl)acetamidine + ATP = 5-amino-1-(5-phospho-beta-D-ribosyl)imidazole + ADP + phosphate + H(+). The protein operates within purine metabolism; IMP biosynthesis via de novo pathway; 5-amino-1-(5-phospho-D-ribosyl)imidazole from N(2)-formyl-N(1)-(5-phospho-D-ribosyl)glycinamide: step 2/2. This chain is Phosphoribosylformylglycinamidine cyclo-ligase, found in Burkholderia ambifaria (strain MC40-6).